The primary structure comprises 519 residues: Lysine 5,6-aminomutase alpha subunit (519 aa).

57–59 (DEV) contacts adenosylcob(III)alamin. Pyridoxal 5'-phosphate-binding positions include 187–192 (RTTGQS), S241, Y266, R271, and N302.

The protein belongs to the KamD family. Heterotetramer of 2 alpha and 2 beta subunits. Adenosylcob(III)alamin serves as cofactor. It depends on pyridoxal 5'-phosphate as a cofactor.

It catalyses the reaction (3S)-3,6-diaminohexanoate = (3S,5S)-3,5-diaminohexanoate. The catalysed reaction is D-lysine = (2R,5S)-2,5-diaminohexanoate. It functions in the pathway amino-acid metabolism; lysine degradation. Its activity is regulated as follows. Rapidly inactivated in the presence of D-lysine and to a lesser extent in the absence of adenosylcobalamin (Adocbl). Activity is stable in the presence of Adocbl when D-lysine is absent. Adocbl imparts thermal stability at 37 degrees Celsius. Catalyzes the migration of the L-beta-lysine and D-lysine epsilon amino group to the delta carbon to produce 3,5-diaminohexanoate and 2,5-diaminohexanoate, respectively. The chain is Lysine 5,6-aminomutase alpha subunit (kamD) from Acetoanaerobium sticklandii (strain ATCC 12662 / DSM 519 / JCM 1433 / CCUG 9281 / NCIMB 10654 / HF) (Clostridium sticklandii).